A 407-amino-acid polypeptide reads, in one-letter code: D-mannose isomerase (407 aa).

Residues His-251 and His-383 each act as proton donor/acceptor in the active site.

It belongs to the N-acylglucosamine 2-epimerase family. In terms of assembly, homodimer.

The enzyme catalyses D-mannose = D-fructose. It carries out the reaction D-lyxose = D-xylulose. Its activity is regulated as follows. Significantly inhibited by divalent metal ions such as Cu(2+), Cd(2+) or Ca(2+). In terms of biological role, catalyzes the reversible isomerization of D-mannose to D-fructose. Shows weaker activity on D-lyxose, but cannot use N-acetyl D-glucosamine. The sequence is that of D-mannose isomerase from Thermobifida fusca (Thermomonospora fusca).